The chain runs to 373 residues: Putative F-box/kelch-repeat protein At2g41360 (373 aa).

In terms of domain architecture, F-box spans 8 to 54 (WSSLSCLPDEMVLNCLARVPRRYYENISCVSVRLRSLVRTPELYRMR). 2 Kelch repeats span residues 116–162 (EIYF…VFDG) and 163–208 (KIHV…MVSS).

This Arabidopsis thaliana (Mouse-ear cress) protein is Putative F-box/kelch-repeat protein At2g41360.